The primary structure comprises 374 residues: 2-oxoglutarate-Fe(II) type oxidoreductase ppzC (374 aa).

The interval 111 to 131 (KKGPFDSGYRGPGTQRVNPDE) is disordered. The Fe2OG dioxygenase domain maps to 220-330 (YPDASLEINF…RVSMPFFWGF (111 aa)). Residues H254, D256, and H311 each coordinate Fe cation. R321 lines the 2-oxoglutarate pocket.

It belongs to the iron/ascorbate-dependent oxidoreductase family. Fe(2+) serves as cofactor.

The enzyme catalyses peramine + 2-oxoglutarate + O2 = 8-hydroxyperamine + succinate + CO2. Its pathway is secondary metabolite biosynthesis. Functionally, 2-oxoglutarate-Fe(II) type oxidoreductase; part of the gene cluster that mediates the biosynthesis of pyrrolopyrazines, secondary metabolites showing insecticidal activity. Within the pathway, ppzC uses peramine as substrate for hydroxylation to yield the novel analog 8-hydroxyperamine. The single multifunctional NRPS ppzA is sufficient to produce peramine via condensation of 1-pyrroline-5-carboxylate and arginine, N-methylation of the alpha-amino group of arginine and reduction of the thioester and the cyclization to form an iminium ion resulting in release from the peptide synthetase. Deprotonation of this intermediate and oxidation of the pyrroline ring would give rise to peramine. In Epichloe species that produce only peramine, the peramine synthetase gene is not localized in a gene cluster, in contrast to Metarhizium species that contain additional pyrrolopyrazine biosynthesis genes. The 2-oxoglutarate-Fe(II) type oxidoreductase ppzC hydroxylates peramine to yield the newly identified compound 8-hydroxyperamine whereas ppzD converts L-proline into trans-4-hydroxy-L-proline, a precursor of peramine biosynthesis. The sequence is that of 2-oxoglutarate-Fe(II) type oxidoreductase ppzC (ppzC) from Metarhizium majus (strain ARSEF 297).